Consider the following 151-residue polypeptide: Small ribosomal subunit protein uS15 (151 aa).

Residue Lys27 is modified to N6-acetyllysine; alternate. The residue at position 27 (Lys27) is an N6-succinyllysine; alternate. Lys27 participates in a covalent cross-link: Glycyl lysine isopeptide (Lys-Gly) (interchain with G-Cter in ubiquitin). Ser30 bears the Phosphoserine mark. Position 34 is an N6-succinyllysine (Lys34). A Phosphotyrosine modification is found at Tyr38. A Glycyl lysine isopeptide (Lys-Gly) (interchain with G-Cter in SUMO2) cross-link involves residue Lys43.

This sequence belongs to the universal ribosomal protein uS15 family. Component of the small ribosomal subunit. Part of the small subunit (SSU) processome, composed of more than 70 proteins and the RNA chaperone small nucleolar RNA (snoRNA) U3. Post-translationally, ubiquitinated at Lys-27 by RNF14 and RNF25 in response to ribosome collisions (ribosome stalling).

It localises to the cytoplasm. Its subcellular location is the nucleus. The protein resides in the nucleolus. Component of the small ribosomal subunit. The ribosome is a large ribonucleoprotein complex responsible for the synthesis of proteins in the cell. Part of the small subunit (SSU) processome, first precursor of the small eukaryotic ribosomal subunit. During the assembly of the SSU processome in the nucleolus, many ribosome biogenesis factors, an RNA chaperone and ribosomal proteins associate with the nascent pre-rRNA and work in concert to generate RNA folding, modifications, rearrangements and cleavage as well as targeted degradation of pre-ribosomal RNA by the RNA exosome. This is Small ribosomal subunit protein uS15 from Homo sapiens (Human).